Reading from the N-terminus, the 1523-residue chain is Lysophospholipase nte1 (1523 aa).

Residues 1-66 (MADGVTLVDS…LPPVPTTMAG (66 aa)) lie on the Cytoplasmic side of the membrane. Residues 67–87 (WIGWVFSFFFQVIPSVLYWVI) traverse the membrane as a helical segment. At 88–109 (TFSTITLPTWLFTLFSMSLTFT) the chain is on the lumenal side. A helical transmembrane segment spans residues 110 to 130 (MNFTTLLLIVLAMVSTISWFI). The Cytoplasmic portion of the chain corresponds to 131–1523 (RYRFLNMYSR…RTMAPRRASI (1393 aa)). Disordered stretches follow at residues 309–384 (VPNS…KSVH) and 524–545 (RAATVVTPESAPAEHDTYGVSP). Positions 370–382 (ESRKHSSRKRRKS) are enriched in basic residues. A nucleoside 3',5'-cyclic phosphate contacts are provided by residues 681-800 (GGTS…GAVA) and 841-961 (RLTS…IAQR). Positions 1220–1384 (LVLGGGGARG…IDNLTVDHMK (165 aa)) constitute a PNPLA domain. Positions 1224–1229 (GGGARG) match the GXGXXG motif. Residues 1251-1255 (GTSIG) carry the GXSXG motif. Residue Ser1253 is the Nucleophile of the active site. Residue Asp1371 is the Proton acceptor of the active site. The short motif at 1371-1373 (DGG) is the DGA/G element. A disordered region spans residues 1502 to 1523 (LPEETEEKKKLQRTMAPRRASI).

This sequence belongs to the NTE family.

It is found in the endoplasmic reticulum membrane. It catalyses the reaction a 1-acyl-sn-glycero-3-phosphocholine + H2O = sn-glycerol 3-phosphocholine + a fatty acid + H(+). With respect to regulation, inhibited by organophosphorus esters. In terms of biological role, intracellular phospholipase B that catalyzes the double deacylation of phosphatidylcholine (PC) to glycerophosphocholine (GroPCho). Plays an important role in membrane lipid homeostasis. Responsible for the rapid PC turnover in response to inositol, elevated temperatures, or when choline is present in the growth medium. The chain is Lysophospholipase nte1 (nte1) from Neosartorya fischeri (strain ATCC 1020 / DSM 3700 / CBS 544.65 / FGSC A1164 / JCM 1740 / NRRL 181 / WB 181) (Aspergillus fischerianus).